The chain runs to 281 residues: Diaminopimelate epimerase (281 aa).

Residues Asn11 and Asn65 each coordinate substrate. Residue Cys74 is the Proton donor of the active site. Substrate-binding positions include Gly75 to Asn76, Asn164, Asn197, and Glu215 to Arg216. Residue Cys224 is the Proton acceptor of the active site. Residue Gly225 to Thr226 coordinates substrate.

This sequence belongs to the diaminopimelate epimerase family. Homodimer.

It is found in the cytoplasm. It catalyses the reaction (2S,6S)-2,6-diaminopimelate = meso-2,6-diaminopimelate. Its pathway is amino-acid biosynthesis; L-lysine biosynthesis via DAP pathway; DL-2,6-diaminopimelate from LL-2,6-diaminopimelate: step 1/1. In terms of biological role, catalyzes the stereoinversion of LL-2,6-diaminopimelate (L,L-DAP) to meso-diaminopimelate (meso-DAP), a precursor of L-lysine and an essential component of the bacterial peptidoglycan. This Heliobacterium modesticaldum (strain ATCC 51547 / Ice1) protein is Diaminopimelate epimerase.